Reading from the N-terminus, the 195-residue chain is Cytochrome c biogenesis ATP-binding export protein CcmA (195 aa).

The ABC transporter domain maps to 1-195; the sequence is MLSLHQLQFN…IKSAQILQLV (195 aa). 33 to 40 is an ATP binding site; the sequence is GANGSGKS.

This sequence belongs to the ABC transporter superfamily. CcmA exporter (TC 3.A.1.107) family. The complex is composed of two ATP-binding proteins (CcmA) and two transmembrane proteins (CcmB).

Its subcellular location is the cell inner membrane. It carries out the reaction heme b(in) + ATP + H2O = heme b(out) + ADP + phosphate + H(+). In terms of biological role, part of the ABC transporter complex CcmAB involved in the biogenesis of c-type cytochromes; once thought to export heme, this seems not to be the case, but its exact role is uncertain. Responsible for energy coupling to the transport system. The protein is Cytochrome c biogenesis ATP-binding export protein CcmA of Rickettsia felis (strain ATCC VR-1525 / URRWXCal2) (Rickettsia azadi).